Consider the following 274-residue polypeptide: MNPEHSPLGKATVYASQYDASLLFPIPRAGAREQIGITSALPFFGTDIWNAYELSWLNARGKPQVAVATFYVPAESPNIVESKSFKLYLGSFAQSKFDSVDAVRDVLKRDVSAACGASVSVQLVSPHDFGKLEMDELDGLSLDRLDLDADVYEPDPSLLSAAEDEAPVEETLVSDLLKSNCPVTGQPDWGSVQIHYVGPQIDHAGLLRYIISFRNHTGFHEQCVERIFLDILHRCKPVKLAVYARYTRRGGLDINPFRTNYNQPMPDNARTARQ.

Residue Val80 to Ser82 coordinates substrate. Ser82 to Lys83 contributes to the NADPH binding site. Residue Cys181 is the Thioimide intermediate of the active site. Asp188 acts as the Proton donor in catalysis. His220–Glu221 is a substrate binding site. Arg249 to Gly250 provides a ligand contact to NADPH.

Belongs to the GTP cyclohydrolase I family. QueF type 2 subfamily. As to quaternary structure, homodimer.

It is found in the cytoplasm. It carries out the reaction 7-aminomethyl-7-carbaguanine + 2 NADP(+) = 7-cyano-7-deazaguanine + 2 NADPH + 3 H(+). It functions in the pathway tRNA modification; tRNA-queuosine biosynthesis. Functionally, catalyzes the NADPH-dependent reduction of 7-cyano-7-deazaguanine (preQ0) to 7-aminomethyl-7-deazaguanine (preQ1). This is NADPH-dependent 7-cyano-7-deazaguanine reductase from Burkholderia multivorans (strain ATCC 17616 / 249).